The sequence spans 307 residues: Acetaldehyde dehydrogenase 2 (307 aa).

Cysteine 131 functions as the Acyl-thioester intermediate in the catalytic mechanism. Residues 162–170 (SVGPGTRKN) and asparagine 273 each bind NAD(+).

Belongs to the acetaldehyde dehydrogenase family.

The enzyme catalyses acetaldehyde + NAD(+) + CoA = acetyl-CoA + NADH + H(+). This chain is Acetaldehyde dehydrogenase 2 (aphF), found in Comamonas testosteroni (Pseudomonas testosteroni).